We begin with the raw amino-acid sequence, 372 residues long: Cytochrome b (372 aa).

4 consecutive transmembrane segments (helical) span residues 25–45 (FGSMLLTCLALQTMTGFFLAI), 69–90 (WMMQNLHAIGASMFFICIYIHI), 105–125 (WLSGTTLLIILMATAFFGYVL), and 170–190 (FFALHFILPFTIISMSSIHIM). Positions 75 and 89 each coordinate heme b. Heme b-binding residues include H174 and H188. H193 contacts a ubiquinone. A run of 4 helical transmembrane segments spans residues 218–238 (HKDMLMLTIMMTALFIIMSFN), 280–300 (LGGAVALVLSVTILMTMPFTH), 312–332 (LMQFMFWTLVTTFIMITWAAT), and 339–358 (FTTIGQVTSILYFTFFIMNP).

The protein belongs to the cytochrome b family. In terms of assembly, the cytochrome bc1 complex contains 3 respiratory subunits (MT-CYB, CYC1 and UQCRFS1), 2 core proteins (UQCRC1 and UQCRC2) and probably 6 low-molecular weight proteins. It depends on heme b as a cofactor.

The protein localises to the mitochondrion inner membrane. Component of the ubiquinol-cytochrome c reductase complex (complex III or cytochrome b-c1 complex) that is part of the mitochondrial respiratory chain. The b-c1 complex mediates electron transfer from ubiquinol to cytochrome c. Contributes to the generation of a proton gradient across the mitochondrial membrane that is then used for ATP synthesis. The sequence is that of Cytochrome b (MT-CYB) from Pantherophis bairdi (Baird's ratsnake).